Reading from the N-terminus, the 931-residue chain is DNA mismatch repair protein MutS (931 aa).

Positions 1 to 10 are enriched in low complexity; that stretch reads MMDDTAMPAR. Positions 1 to 34 are disordered; the sequence is MMDDTAMPARAEADAAEDELAAPAGIDRTAKADK. 674 to 681 lines the ATP pocket; that stretch reads GPNMAGKS.

It belongs to the DNA mismatch repair MutS family.

This protein is involved in the repair of mismatches in DNA. It is possible that it carries out the mismatch recognition step. This protein has a weak ATPase activity. This is DNA mismatch repair protein MutS from Azorhizobium caulinodans (strain ATCC 43989 / DSM 5975 / JCM 20966 / LMG 6465 / NBRC 14845 / NCIMB 13405 / ORS 571).